A 1226-amino-acid polypeptide reads, in one-letter code: Chromosome partition protein Smc (1226 aa).

Residue 32–39 (PNGCGKSN) coordinates ATP. 2 coiled-coil regions span residues 173–231 (ITKF…IKRN) and 269–491 (NSLE…SKSL). Residues 527 to 635 (YQLLGNLIQC…FDGYFIASKF (109 aa)) enclose the SMC hinge domain. Coiled-coil stretches lie at residues 679–741 (QGVV…AAKK), 775–965 (MLES…LREA), and 1006–1078 (HRRY…KSKE).

This sequence belongs to the SMC family. In terms of assembly, homodimer.

The protein localises to the cytoplasm. Its function is as follows. Required for chromosome condensation and partitioning. The chain is Chromosome partition protein Smc from Halobacteriovorax marinus (strain ATCC BAA-682 / DSM 15412 / SJ) (Bacteriovorax marinus).